The primary structure comprises 701 residues: DC-STAMP domain-containing protein 2 (701 aa).

4 helical membrane-spanning segments follow: residues 15-35, 40-60, 82-102, and 215-235; these read TCGF…ELLG, PFGC…GMGF, LLLL…NTLQ, and FPHL…LASL. N-linked (GlcNAc...) asparagine glycans are attached at residues N272 and N284. 2 consecutive transmembrane segments (helical) span residues 310–330 and 404–424; these read ALSL…IQAL and LLIM…LDLA. N-linked (GlcNAc...) asparagine glycosylation is present at N468. Residues 488 to 508 form a helical membrane-spanning segment; that stretch reads YIVIGTMYGLCFFVTLFGSYV. A disordered region spans residues 673–701; sequence LQEALGTNLSDKSTSKPERAGNRNQDRKQ. The segment covering 685–701 has biased composition (basic and acidic residues); that stretch reads STSKPERAGNRNQDRKQ.

As to quaternary structure, interacts with DCST1. As to expression, expressed in testis.

The protein localises to the cytoplasmic vesicle. The protein resides in the secretory vesicle. It localises to the acrosome membrane. Functionally, essential sperm cell-surface protein required for sperm-egg fusion and fertilization. This chain is DC-STAMP domain-containing protein 2, found in Mus musculus (Mouse).